The sequence spans 361 residues: Phospho-N-acetylmuramoyl-pentapeptide-transferase (361 aa).

A run of 10 helical transmembrane segments spans residues 25–45 (TGGA…WIID), 72–92 (TPTM…VLWA), 95–115 (LNPY…VGFY), 135–155 (LLIE…LGRG), 169–189 (VVLN…VGAG), 200–220 (GLAI…SYLV), 240–260 (LAVL…FNAP), 264–284 (IFMG…IAVA), 289–309 (IVLA…IVQV), and 338–358 (QIVI…LSTL).

This sequence belongs to the glycosyltransferase 4 family. MraY subfamily. The cofactor is Mg(2+).

The protein localises to the cell inner membrane. It catalyses the reaction UDP-N-acetyl-alpha-D-muramoyl-L-alanyl-gamma-D-glutamyl-meso-2,6-diaminopimeloyl-D-alanyl-D-alanine + di-trans,octa-cis-undecaprenyl phosphate = di-trans,octa-cis-undecaprenyl diphospho-N-acetyl-alpha-D-muramoyl-L-alanyl-D-glutamyl-meso-2,6-diaminopimeloyl-D-alanyl-D-alanine + UMP. Its pathway is cell wall biogenesis; peptidoglycan biosynthesis. Its function is as follows. Catalyzes the initial step of the lipid cycle reactions in the biosynthesis of the cell wall peptidoglycan: transfers peptidoglycan precursor phospho-MurNAc-pentapeptide from UDP-MurNAc-pentapeptide onto the lipid carrier undecaprenyl phosphate, yielding undecaprenyl-pyrophosphoryl-MurNAc-pentapeptide, known as lipid I. The sequence is that of Phospho-N-acetylmuramoyl-pentapeptide-transferase from Rhodopseudomonas palustris (strain HaA2).